An 885-amino-acid polypeptide reads, in one-letter code: GPI ethanolamine phosphate transferase 2 (885 aa).

N-linked (GlcNAc...) asparagine glycosylation is found at asparagine 82, asparagine 155, and asparagine 194. The helical transmembrane segment at 413 to 433 (DIYAGALILVITALAVIVVFN) threads the bilayer. Asparagine 443 carries N-linked (GlcNAc...) asparagine glycosylation. A run of 3 helical transmembrane segments spans residues 447–467 (VMFY…SSLI), 473–493 (IWYF…FDTF), and 495–514 (SLQN…FMRS). An N-linked (GlcNAc...) asparagine glycan is attached at asparagine 516. 8 consecutive transmembrane segments (helical) span residues 539–559 (LMWG…YIQG), 581–601 (GLIS…FKLL), 648–668 (IQLS…RVII), 697–717 (ENIP…KLIY), 726–746 (YILT…FCMG), 768–788 (VFLV…FWSL), 820–840 (ILLV…VNLV), and 865–885 (SWIL…VLLF).

This sequence belongs to the PIGG/PIGN/PIGO family. PIGG subfamily.

The protein localises to the endoplasmic reticulum membrane. It functions in the pathway glycolipid biosynthesis; glycosylphosphatidylinositol-anchor biosynthesis. Its function is as follows. Ethanolamine phosphate transferase involved in glycosylphosphatidylinositol-anchor biosynthesis. Transfers ethanolamine phosphate to the GPI second mannose. The chain is GPI ethanolamine phosphate transferase 2 (GPI7) from Candida albicans (strain SC5314 / ATCC MYA-2876) (Yeast).